A 78-amino-acid chain; its full sequence is Acyl carrier protein (78 aa).

The region spanning 2 to 77 is the Carrier domain; the sequence is SDIEQRVKKI…QAIDYVNANL (76 aa). Ser37 is subject to O-(pantetheine 4'-phosphoryl)serine.

The protein belongs to the acyl carrier protein (ACP) family. 4'-phosphopantetheine is transferred from CoA to a specific serine of apo-ACP by AcpS. This modification is essential for activity because fatty acids are bound in thioester linkage to the sulfhydryl of the prosthetic group.

Its subcellular location is the cytoplasm. Its pathway is lipid metabolism; fatty acid biosynthesis. Carrier of the growing fatty acid chain in fatty acid biosynthesis. In Methylobacillus flagellatus (strain ATCC 51484 / DSM 6875 / VKM B-1610 / KT), this protein is Acyl carrier protein.